A 252-amino-acid chain; its full sequence is C4b-binding protein beta chain (252 aa).

Residues 1–17 (MFFWCACCLMVAWRVSA) form the signal peptide. Sushi domains are found at residues 21–78 (EHCP…ECRL), 79–136 (GHCP…ICKS), and 137–193 (RDCD…VCKL). Intrachain disulfides connect Cys-23–Cys-63, Cys-49–Cys-76, Cys-81–Cys-121, Cys-107–Cys-134, Cys-139–Cys-179, and Cys-165–Cys-191. Asn-64, Asn-71, Asn-98, Asn-117, and Asn-154 each carry an N-linked (GlcNAc...) asparagine glycan.

As to quaternary structure, disulfide-linked complex of alpha and beta chains of 3 possible sorts: a 570 kDa complex of 7 alpha chains and 1 beta chain, a 530 kDa homoheptamer of alpha chains or a 500 kDa complex of 6 alpha chains and 1 beta chain. The central body of the alpha chain homomer supports tentacles, each with the binding site for C4b at the end.

It is found in the secreted. In terms of biological role, controls the classical pathway of complement activation. It binds as a cofactor to C3b/C4b inactivator (C3bINA), which then hydrolyzes the complement fragment C4b. It also accelerates the degradation of the C4bC2a complex (C3 convertase) by dissociating the complement fragment C2a. It also interacts with anticoagulant protein S and with serum amyloid P component. The beta chain binds protein S. The protein is C4b-binding protein beta chain (C4BPB) of Homo sapiens (Human).